Reading from the N-terminus, the 256-residue chain is Thiazole synthase (256 aa).

The active-site Schiff-base intermediate with DXP is the Lys-96. 1-deoxy-D-xylulose 5-phosphate contacts are provided by residues Gly-157, 183–184 (AG), and 205–206 (NT).

The protein belongs to the ThiG family. As to quaternary structure, homotetramer. Forms heterodimers with either ThiH or ThiS.

Its subcellular location is the cytoplasm. The enzyme catalyses [ThiS sulfur-carrier protein]-C-terminal-Gly-aminoethanethioate + 2-iminoacetate + 1-deoxy-D-xylulose 5-phosphate = [ThiS sulfur-carrier protein]-C-terminal Gly-Gly + 2-[(2R,5Z)-2-carboxy-4-methylthiazol-5(2H)-ylidene]ethyl phosphate + 2 H2O + H(+). The protein operates within cofactor biosynthesis; thiamine diphosphate biosynthesis. Functionally, catalyzes the rearrangement of 1-deoxy-D-xylulose 5-phosphate (DXP) to produce the thiazole phosphate moiety of thiamine. Sulfur is provided by the thiocarboxylate moiety of the carrier protein ThiS. In vitro, sulfur can be provided by H(2)S. This chain is Thiazole synthase, found in Bacillus cereus (strain 03BB102).